Consider the following 120-residue polypeptide: Protein CcdB (120 aa).

One can recognise a Response regulatory domain in the interval 3-118 (RVLVVDDAKF…KVLEAVSRVM (116 aa)). Position 53 is a 4-aspartylphosphate (aspartate 53).

The protein is Protein CcdB (ccdB) of Bacillus subtilis (strain 168).